The sequence spans 382 residues: MAP kinase-activated protein kinase 3 (382 aa).

The residue at position 1 (Met1) is an N-acetylmethionine. Residues Met1–Pro34 form a disordered region. The segment covering Gly20 to Gly29 has biased composition (gly residues). A Protein kinase domain is found at Gln44 to Ile304. ATP-binding positions include Leu50–Val58 and Lys73. Asp166 acts as the Proton acceptor in catalysis. Thr201 carries the phosphothreonine; by MAPK14 modification. At Ser251 the chain carries Phosphoserine; by MAPK14. Position 307 is a phosphoserine; by autocatalysis (Ser307). Residues Ser307–Arg343 are autoinhibitory helix. Residue Thr313 is modified to Phosphothreonine; by MAPK14. Positions Met335–Val344 match the Nuclear export signal (NES) motif. The tract at residues Asp345 to Gln369 is p38 MAPK-binding site. 2 short sequence motifs (bipartite nuclear localization signal) span residues Lys350–Asp353 and Lys364–Lys368. A disordered region spans residues Ser357 to Gln382. Residues Ala370–Gln382 show a composition bias toward polar residues.

The protein belongs to the protein kinase superfamily. CAMK Ser/Thr protein kinase family. In terms of assembly, heterodimer with p38-alpha/MAPK14. The heterodimer with p38-alpha/MAPK14 forms a stable complex: molecules are positioned 'face to face' so that the ATP-binding sites of both kinases are at the heterodimer interface. Interacts with TCF3 and with polycomb proteins, such as PCH2 and BMI1/PCGF4. Phosphorylated and activated by MAPK1/ERK2 and MAPK3/ERK1. Phosphorylated and activated by MAP kinase p38-alpha/MAPK14 at Thr-201, Ser-251 and Thr-313. As to expression, widely expressed, with a higher expression level observed in heart and skeletal muscle. No expression in brain. Expressed in the retinal pigment epithelium.

The protein resides in the nucleus. It localises to the cytoplasm. It catalyses the reaction L-seryl-[protein] + ATP = O-phospho-L-seryl-[protein] + ADP + H(+). The enzyme catalyses L-threonyl-[protein] + ATP = O-phospho-L-threonyl-[protein] + ADP + H(+). Activated following phosphorylation by p38-alpha/MAPK14 following various stresses. Inhibited by ligand 5B (2'-[2-(1,3-benzodioxol-5-yl)pyrimidin-4-yl]-5',6'-dihydrospiro[piperidine-4,7'-pyrrolo[3,2-c]pyridin]- 4'(1'h)-one) and ligand P4O (2-[2-(2-fluorophenyl)pyridin-4-yl]-1,5,6,7-tetrahydro- 4h-pyrrolo[3,2-c]pyridin-4-one), 2 ATP-competitive inhibitors. Its function is as follows. Stress-activated serine/threonine-protein kinase involved in cytokines production, endocytosis, cell migration, chromatin remodeling and transcriptional regulation. Following stress, it is phosphorylated and activated by MAP kinase p38-alpha/MAPK14, leading to phosphorylation of substrates. Phosphorylates serine in the peptide sequence, Hyd-X-R-X(2)-S, where Hyd is a large hydrophobic residue. MAPKAPK2 and MAPKAPK3, share the same function and substrate specificity, but MAPKAPK3 kinase activity and level in protein expression are lower compared to MAPKAPK2. Phosphorylates HSP27/HSPB1, KRT18, KRT20, RCSD1, RPS6KA3, TAB3 and TTP/ZFP36. Mediates phosphorylation of HSP27/HSPB1 in response to stress, leading to dissociate HSP27/HSPB1 from large small heat-shock protein (sHsps) oligomers and impair their chaperone activities and ability to protect against oxidative stress effectively. Involved in inflammatory response by regulating tumor necrosis factor (TNF) and IL6 production post-transcriptionally: acts by phosphorylating AU-rich elements (AREs)-binding proteins, such as TTP/ZFP36, leading to regulate the stability and translation of TNF and IL6 mRNAs. Phosphorylation of TTP/ZFP36, a major post-transcriptional regulator of TNF, promotes its binding to 14-3-3 proteins and reduces its ARE mRNA affinity leading to inhibition of dependent degradation of ARE-containing transcript. Involved in toll-like receptor signaling pathway (TLR) in dendritic cells: required for acute TLR-induced macropinocytosis by phosphorylating and activating RPS6KA3. Also acts as a modulator of Polycomb-mediated repression. This is MAP kinase-activated protein kinase 3 (MAPKAPK3) from Homo sapiens (Human).